A 272-amino-acid chain; its full sequence is HTH-type transcriptional repressor AllR (272 aa).

The segment at 1–20 (MTEVRRRGRPGQAEPTAQKG) is disordered. In terms of domain architecture, HTH iclR-type spans 21-83 (AQALERGIAI…SQLGWWHIGL (63 aa)). The H-T-H motif DNA-binding region spans 43-62 (VSDISGSLDLPLSTTFRLLK). The 170-residue stretch at 98-267 (VLSVAGPFMH…AKDISTALGL (170 aa)) folds into the IclR-ED domain. Residues 154 to 156 (SGA), aspartate 207, cysteine 217, and 234 to 236 (SIS) contribute to the glyoxylate site.

Its function is as follows. Negative regulator of allantoin and glyoxylate utilization operons. Binds to the gcl promoter and to the allS-allA intergenic region. This chain is HTH-type transcriptional repressor AllR (allR), found in Salmonella typhi.